The chain runs to 309 residues: Probable manganese-dependent inorganic pyrophosphatase (309 aa).

The Mn(2+) site is built by His-9, Asp-13, Asp-15, Asp-75, His-97, and Asp-149.

It belongs to the PPase class C family. It depends on Mn(2+) as a cofactor.

It localises to the cytoplasm. The enzyme catalyses diphosphate + H2O = 2 phosphate + H(+). The polypeptide is Probable manganese-dependent inorganic pyrophosphatase (Bacillus mycoides (strain KBAB4) (Bacillus weihenstephanensis)).